A 231-amino-acid polypeptide reads, in one-letter code: MKHLLSVFALGGAVLLAGCVAPTPKPNDPYYAPVLPRTPLPAAANNGSIYQAGFEQSLYTDRKAFRVGDIITITLNERTSASKNAGSQIQKNSKADIGLTSLFGSSPNTNNPFGGGDLSLEAGYSGDRTTKGDSKATQGNTLTGSITVTVAEVLPNGIIAVRGEKWMTLNTGEELVRIAGLVRADDIATDNTVPSTRVADARITYSGTGSFADASQPGWLDRFFISPLWPF.

Positions 1–18 (MKHLLSVFALGGAVLLAG) are cleaved as a signal peptide. Cys19 carries the N-palmitoyl cysteine lipid modification. Residue Cys19 is the site of S-diacylglycerol cysteine attachment.

The protein belongs to the FlgH family. As to quaternary structure, the basal body constitutes a major portion of the flagellar organelle and consists of four rings (L,P,S, and M) mounted on a central rod.

The protein localises to the cell outer membrane. It localises to the bacterial flagellum basal body. In terms of biological role, assembles around the rod to form the L-ring and probably protects the motor/basal body from shearing forces during rotation. The chain is Flagellar L-ring protein from Pseudomonas entomophila (strain L48).